Here is a 224-residue protein sequence, read N- to C-terminus: Cytidylate kinase (224 aa).

Residue 11–19 (GPAGAGKST) participates in ATP binding.

It belongs to the cytidylate kinase family. Type 1 subfamily.

The protein resides in the cytoplasm. It carries out the reaction CMP + ATP = CDP + ADP. It catalyses the reaction dCMP + ATP = dCDP + ADP. In Lysinibacillus sphaericus (strain C3-41), this protein is Cytidylate kinase.